A 311-amino-acid polypeptide reads, in one-letter code: Putative mitochondrial transporter UCP3 (311 aa).

Residues 1–10 (MVGLKPSEVP) are Mitochondrial intermembrane-facing. A helical transmembrane segment spans residues 11 to 32 (PTTAVKFLGAGTAACFADLLTF). 3 Solcar repeats span residues 11-105 (PTTA…VKQF), 114-205 (SSIT…IKEK), and 214-299 (DNFP…LKRA). Residues 33 to 76 (PLDTAKVRLQIQGENQATQAARRIQYRGVLGTILTMVRTEGPRS) lie on the Mitochondrial matrix side of the membrane. The helical transmembrane segment at 77 to 99 (PYNGLVAGLQRQMSFASIRIGLY) threads the bilayer. The Mitochondrial intermembrane portion of the chain corresponds to 100–119 (DSVKQFYTPKGSDHSSITTR). The helical transmembrane segment at 120–136 (ILAGCTTGAMAVSCAQP) threads the bilayer. Over 137 to 182 (TDVVKVRFQASIHLGAGSNRKYSGTMDAYRTIAREEGVRGLWKGTL) the chain is Mitochondrial matrix. Residues 183–199 (PNITRNAIVNCAEMVTY) form a helical membrane-spanning segment. Over 200 to 216 (DIIKEKLLDYHLLTDNF) the chain is Mitochondrial intermembrane. The chain crosses the membrane as a helical span at residues 217 to 236 (PCHLISAFGAGFCATVVASP). Residues 237–270 (VDVVKTRYMNSPPGQYCSPLDCMLKMVTQEGPTA) are Mitochondrial matrix-facing. Residues 271–293 (FYKGFTPSFLRLGTWNVVMFVTY) traverse the membrane as a helical segment. The interval 278 to 300 (SFLRLGTWNVVMFVTYEQLKRAL) is purine nucleotide binding. Over 294-311 (EQLKRALMKVQMLRESPF) the chain is Mitochondrial intermembrane.

Belongs to the mitochondrial carrier (TC 2.A.29) family. Interacts with HAX1; the interaction is direct and calcium-dependent.

The protein resides in the mitochondrion inner membrane. Its function is as follows. Putative transmembrane transporter that plays a role in mitochondrial metabolism via an as yet unclear mechanism. Originally, this mitochondrial protein was thought to act as a proton transmembrane transporter from the mitochondrial intermembrane space into the matrix, causing proton leaks through the inner mitochondrial membrane, thereby uncoupling mitochondrial membrane potential generation from ATP synthesis. However, this function is controversial and uncoupling may not be the function, or at least not the main function, but rather a consequence of more conventional metabolite transporter activity. The protein is Putative mitochondrial transporter UCP3 of Canis lupus familiaris (Dog).